The chain runs to 258 residues: Aspartate/glutamate leucyltransferase (258 aa).

This sequence belongs to the R-transferase family. Bpt subfamily.

The protein localises to the cytoplasm. It catalyses the reaction N-terminal L-glutamyl-[protein] + L-leucyl-tRNA(Leu) = N-terminal L-leucyl-L-glutamyl-[protein] + tRNA(Leu) + H(+). The enzyme catalyses N-terminal L-aspartyl-[protein] + L-leucyl-tRNA(Leu) = N-terminal L-leucyl-L-aspartyl-[protein] + tRNA(Leu) + H(+). Functionally, functions in the N-end rule pathway of protein degradation where it conjugates Leu from its aminoacyl-tRNA to the N-termini of proteins containing an N-terminal aspartate or glutamate. The protein is Aspartate/glutamate leucyltransferase of Rhodopseudomonas palustris (strain BisB18).